A 160-amino-acid chain; its full sequence is MKLNELRDNEGAARKKKRVARGPGSGKGKTAGRGIKGQKSRSGVALNGYEGGQMPLYRRLPKRGFSKPNRKEYAVVNLGLIQKFVDAGKLDASQPIDENAIVAAGVTSHKRDGIRVLAKGEITAKLTLTVAGASKSAVEAVEKAGGSITLTAPAAAASAE.

The segment covering 1–13 (MKLNELRDNEGAA) has biased composition (basic and acidic residues). The segment at 1 to 51 (MKLNELRDNEGAARKKKRVARGPGSGKGKTAGRGIKGQKSRSGVALNGYEG) is disordered. A compositionally biased stretch (gly residues) spans 23-35 (PGSGKGKTAGRGI).

The protein belongs to the universal ribosomal protein uL15 family. As to quaternary structure, part of the 50S ribosomal subunit.

Its function is as follows. Binds to the 23S rRNA. This is Large ribosomal subunit protein uL15 from Cereibacter sphaeroides (strain ATCC 17025 / ATH 2.4.3) (Rhodobacter sphaeroides).